The chain runs to 71 residues: Virion membrane protein A13 homolog (71 aa).

The chain crosses the membrane as a helical span at residues 1 to 21 (MGIIDTFVITAVTVIIFCLLI). Residues 22-70 (YAAYKRYKCIPSPDDRDKVLKSTLNDDTLFNQTLTPDQVKALHRLVTSS) are Virion surface-facing.

Belongs to the chordopoxvirinae A13 family.

It is found in the virion membrane. In terms of biological role, essential for the encapsidation of DNA into immature virions (IV) and the subsequent maturation of IV into mature virions (MV). The protein is Virion membrane protein A13 homolog of Vertebrata (FPV).